The chain runs to 459 residues: Carbonic anhydrase 9 (459 aa).

The first 37 residues, 1–37, serve as a signal peptide directing secretion; the sequence is MAPLCPSPWLPLLIPAPAPGLTVQLLLSLLLLVPVHP. The tract at residues 38–112 is proteoglycan-like (PG); it reads QRLPRMQEDS…EEEGSLKLED (75 aa). Topologically, residues 38-414 are extracellular; that stretch reads QRLPRMQEDS…QLNSCLAAGD (377 aa). A disordered region spans residues 42-154; that stretch reads RMQEDSPLGG…GDPPWPRVSP (113 aa). The segment covering 55–95 has biased composition (acidic residues); it reads GEDDPLGEEDLPSEEDSPREEDPPGEEDLPGEEDLPGEEDL. Basic and acidic residues predominate over residues 96-112; that stretch reads PEVKPKSEEEGSLKLED. O-linked (GlcNAc...) threonine glycosylation is present at Thr-115. Residues 129-140 are compositionally biased toward basic and acidic residues; the sequence is AHRDKEGDDQSH. The segment at 138-391 is catalytic; that stretch reads QSHWRYGGDP…NGRVIEASFP (254 aa). Residues 139–390 form the Alpha-carbonic anhydrase domain; the sequence is SHWRYGGDPP…LNGRVIEASF (252 aa). Residues Cys-156 and Cys-336 are joined by a disulfide bond. His-200 serves as the catalytic Proton donor/acceptor. Positions 226, 228, and 251 each coordinate Zn(2+). Residue 332-333 participates in substrate binding; the sequence is TT. An N-linked (GlcNAc...) asparagine glycan is attached at Asn-346. Residues 415–435 form a helical membrane-spanning segment; it reads ILALVFGLLFAVTSVAFLVQM. At 436–459 the chain is on the cytoplasmic side; sequence RRQHRRGTKGGVSYRPAEVAETGA. At Tyr-449 the chain carries Phosphotyrosine.

It belongs to the alpha-carbonic anhydrase family. In terms of assembly, forms oligomers linked by disulfide bonds. It depends on Zn(2+) as a cofactor. In terms of processing, asn-346 bears high-mannose type glycan structures. Expressed primarily in carcinoma cells lines. Expression is restricted to very few normal tissues and the most abundant expression is found in the epithelial cells of gastric mucosa.

The protein localises to the nucleus. It localises to the nucleolus. The protein resides in the cell membrane. It is found in the cell projection. Its subcellular location is the microvillus membrane. It catalyses the reaction hydrogencarbonate + H(+) = CO2 + H2O. With respect to regulation, inhibited by coumarins, saccharin, sulfonamide derivatives such as acetazolamide (AZA) and Foscarnet (phosphonoformate trisodium salt). Functionally, catalyzes the interconversion between carbon dioxide and water and the dissociated ions of carbonic acid (i.e. bicarbonate and hydrogen ions). The protein is Carbonic anhydrase 9 (CA9) of Homo sapiens (Human).